We begin with the raw amino-acid sequence, 507 residues long: Blue light receptor lreB (507 aa).

Positions 170–234 (RVLNEMKDML…EEMNECITTT (65 aa)) constitute a PAS domain. A GATA-type zinc finger spans residues 463–488 (CTDCGTSDSPEWRKGPEGPKTLCNAC).

Functionally, probable transcription factor involved in light regulation. Plays crucial roles in fungal growth and asexual development. Involved in conidiophore formation, sclerotium production, and conidial stress tolerance. Positively regulates the fungal pathogenicity towards maize and aflatoxin B1 production. The protein is Blue light receptor lreB of Aspergillus flavus.